The chain runs to 20 residues: Acidic phospholipase A2 CbIbeta (20 aa).

This sequence belongs to the phospholipase A2 family. Group II subfamily. D49 sub-subfamily. In terms of assembly, heterodimer of an acidic subunit (CbIalpha or CbIbeta) and a basic subunit (CbII). The acidic subunit (CbI) is non-toxic, and increases the toxicity of the basic subunit (CbII). It depends on Ca(2+) as a cofactor. In terms of processing, contains 7 disulfide bonds. As to expression, expressed by the venom gland.

The protein localises to the secreted. It carries out the reaction a 1,2-diacyl-sn-glycero-3-phosphocholine + H2O = a 1-acyl-sn-glycero-3-phosphocholine + a fatty acid + H(+). In terms of biological role, heterodimer: presynaptic neurotoxin. Its function is as follows. Monomer: Snake venom phospholipase A2 (PLA2) is inactive towards micellar phosphatidylcholine but is weakly active towards non-micellar dithiolecithin. PLA2 catalyzes the calcium-dependent hydrolysis of the 2-acyl groups in 3-sn-phosphoglycerides. The chain is Acidic phospholipase A2 CbIbeta from Pseudocerastes fieldi (Field's horned viper).